Reading from the N-terminus, the 285-residue chain is Probable endonuclease 4 (285 aa).

9 residues coordinate Zn(2+): histidine 68, histidine 108, glutamate 145, aspartate 179, histidine 182, histidine 216, aspartate 229, histidine 231, and glutamate 261.

It belongs to the AP endonuclease 2 family. It depends on Zn(2+) as a cofactor.

The catalysed reaction is Endonucleolytic cleavage to 5'-phosphooligonucleotide end-products.. Functionally, endonuclease IV plays a role in DNA repair. It cleaves phosphodiester bonds at apurinic or apyrimidinic (AP) sites, generating a 3'-hydroxyl group and a 5'-terminal sugar phosphate. The sequence is that of Probable endonuclease 4 from Geotalea daltonii (strain DSM 22248 / JCM 15807 / FRC-32) (Geobacter daltonii).